A 202-amino-acid chain; its full sequence is Adapter protein MecA 2 (202 aa).

It belongs to the MecA family. As to quaternary structure, homodimer.

Enables the recognition and targeting of unfolded and aggregated proteins to the ClpC protease or to other proteins involved in proteolysis. Acts negatively in the development of competence by binding ComK and recruiting it to the ClpCP protease. When overexpressed, inhibits sporulation. Also involved in Spx degradation by ClpC. The protein is Adapter protein MecA 2 (mecA2) of Bacillus cereus (strain ATCC 14579 / DSM 31 / CCUG 7414 / JCM 2152 / NBRC 15305 / NCIMB 9373 / NCTC 2599 / NRRL B-3711).